The sequence spans 243 residues: Aliphatic sulfonates import ATP-binding protein SsuB (243 aa).

One can recognise an ABC transporter domain in the interval 11–230; the sequence is ATVRGLRKSY…RTHPSFASYT (220 aa). 43–50 is a binding site for ATP; that stretch reads GRSGSGKS.

Belongs to the ABC transporter superfamily. Aliphatic sulfonates importer (TC 3.A.1.17.2) family. In terms of assembly, the complex is composed of two ATP-binding proteins (SsuB), two transmembrane proteins (SsuC) and a solute-binding protein (SsuA).

The protein resides in the cell membrane. The enzyme catalyses ATP + H2O + aliphatic sulfonate-[sulfonate-binding protein]Side 1 = ADP + phosphate + aliphatic sulfonateSide 2 + [sulfonate-binding protein]Side 1.. Its function is as follows. Part of the ABC transporter complex SsuABC involved in aliphatic sulfonates import. Responsible for energy coupling to the transport system. Is also involved in taurine transport. Seems to not be involved in long chain aliphatic sulfonates transport (chain length of eight carbon atoms or more). The sequence is that of Aliphatic sulfonates import ATP-binding protein SsuB from Corynebacterium glutamicum (strain ATCC 13032 / DSM 20300 / JCM 1318 / BCRC 11384 / CCUG 27702 / LMG 3730 / NBRC 12168 / NCIMB 10025 / NRRL B-2784 / 534).